A 291-amino-acid polypeptide reads, in one-letter code: Pyridoxal kinase PdxY (291 aa).

Substrate contacts are provided by residues serine 9 and 44–45; that span reads TQ. ATP-binding positions include aspartate 112, valine 144, glutamate 149, lysine 182, and 207-210; that span reads RPHL. Aspartate 221 contacts substrate.

It belongs to the pyridoxine kinase family. PdxY subfamily. As to quaternary structure, homodimer. It depends on Mg(2+) as a cofactor.

The enzyme catalyses pyridoxal + ATP = pyridoxal 5'-phosphate + ADP + H(+). It functions in the pathway cofactor metabolism; pyridoxal 5'-phosphate salvage; pyridoxal 5'-phosphate from pyridoxal: step 1/1. Pyridoxal kinase involved in the salvage pathway of pyridoxal 5'-phosphate (PLP). Catalyzes the phosphorylation of pyridoxal to PLP. This is Pyridoxal kinase PdxY from Photobacterium profundum (strain SS9).